The sequence spans 64 residues: uncharacterized protein (64 aa).

Residues 35-64 (TIRKPPIEHAAGPLGSTSRAGHRSYGGVAS) are disordered.

This is an uncharacterized protein from Mycobacterium tuberculosis (strain ATCC 25618 / H37Rv).